Reading from the N-terminus, the 340-residue chain is Sulfotransferase 2B1 (340 aa).

67–72 (KSGTNW) serves as a coordination point for 3'-phosphoadenylyl sulfate. Trp-95 and Trp-100 together coordinate substrate. The Proton acceptor role is filled by His-122. Residues Arg-144, Ser-152, Tyr-207, 241-246 (SAFAAM), and 271-273 (RKG) contribute to the 3'-phosphoadenylyl sulfate site. Residues 301 to 340 (LPSFPWDRSAEDGSPDGETEPSPSPSPGLASDDPNPGSSQ) are disordered.

It belongs to the sulfotransferase 1 family. In terms of tissue distribution, isoform 1 is expressed in skin and testis. Higher level of isoform 2 expressed in skin and intestine, moderate level in the kidney, low level in liver, stomach and placenta.

It localises to the cytoplasm. The protein resides in the cytosol. It is found in the microsome. The protein localises to the nucleus. It catalyses the reaction an alcohol + 3'-phosphoadenylyl sulfate = an alkyl sulfate + adenosine 3',5'-bisphosphate + H(+). The enzyme catalyses pregnenolone + 3'-phosphoadenylyl sulfate = pregnenolone sulfate + adenosine 3',5'-bisphosphate + H(+). It carries out the reaction 3beta-hydroxyandrost-5-en-17-one + 3'-phosphoadenylyl sulfate = dehydroepiandrosterone 3-sulfate + adenosine 3',5'-bisphosphate + H(+). The catalysed reaction is cholesterol + 3'-phosphoadenylyl sulfate = cholesterol sulfate + adenosine 3',5'-bisphosphate + H(+). Sulfotransferase that utilizes 3'-phospho-5'-adenylyl sulfate (PAPS) as sulfonate donor to catalyze the sulfate conjugation. Sulfonation increases the water solubility of most compounds, and therefore their renal excretion, but it can also result in bioactivation to form active metabolites. Sulfonates cholesterol. Catalyzes sulfation of the 3beta-hydroxyl groups of steroids, such as, pregnenolone and dehydroepiandrosterone (DHEA). Conjugates efficiently cholesterol but has a greater affinity for pregnenolone sulfation. Does not show high activity with DHEA. Plays a role in epidermal cholesterol metabolism and in the regulation of epidermal proliferation and differentiation. Its function is as follows. Prefers pregnenolone over DHEA as a substrate and does not sulfate cholesterol. The sequence is that of Sulfotransferase 2B1 from Rattus norvegicus (Rat).